The sequence spans 138 residues: Membrane glycoprotein UL139 (138 aa).

An N-terminal signal peptide occupies residues 1–15 (MLWILVLFALAASAS). Residues 17–37 (TTTGTSSNSSQSTSAGTTNTT) are disordered. The chain crosses the membrane as a helical span at residues 64-84 (GWTLSGLLLIFTCCLCCFWLV). Residues 113–129 (SDATLPMGTTGSYTPPQ) are compositionally biased toward polar residues. A disordered region spans residues 113-138 (SDATLPMGTTGSYTPPQDGSFPPPPR).

It is found in the host membrane. This chain is Membrane glycoprotein UL139 (UL139), found in Homo sapiens (Human).